The chain runs to 45 residues: Small polypeptide DEVIL 2 (45 aa).

The tract at residues 14-45 (SQSRRLGKYLKEQKGRIYIIRRCVMMLLCSHD) is required for DVL/RTFL small polypeptide activity. Residues 17–33 (RRLGKYLKEQKGRIYII) traverse the membrane as a helical segment.

The protein belongs to the DVL/RTFL small polypeptides family. Mostly expressed in stems and, to a lower extent, in roots and leaves.

The protein localises to the cell membrane. Functionally, small polypeptide acting as a regulatory molecule which coordinates cellular responses required for differentiation, growth and development, including leaves shape, pedicule elongation, inflorescence organization and fruit maturation, probably by restricting polar cell proliferation in lateral organs and coordinating socket cell recruitment and differentiation at trichome sites. The protein is Small polypeptide DEVIL 2 of Arabidopsis thaliana (Mouse-ear cress).